A 21-amino-acid polypeptide reads, in one-letter code: uncharacterized protein (21 aa).

This is an uncharacterized protein from Methanococcus voltae.